A 310-amino-acid chain; its full sequence is Glutaminase (310 aa).

Substrate contacts are provided by Ser-67, Asn-118, Glu-161, Asn-168, Tyr-192, Tyr-244, and Val-262.

This sequence belongs to the glutaminase family. Homotetramer.

The enzyme catalyses L-glutamine + H2O = L-glutamate + NH4(+). This is Glutaminase from Legionella pneumophila (strain Corby).